A 1622-amino-acid polypeptide reads, in one-letter code: FK506-binding protein 5 (1622 aa).

The region spanning 178–269 is the PPIase FKBP-type domain; that stretch reads GDRVSIKYAG…IFDLEVTGSK (92 aa). The tract at residues 268–306 is disordered; that stretch reads SKKKEGSEPSLPSLNGQPSNAPQQSLPTQLFDNSPVPQD. The span at 277 to 303 shows a compositional bias: polar residues; it reads SLPSLNGQPSNAPQQSLPTQLFDNSPV. Arg-314 carries the omega-N-methylarginine modification. 2 disordered regions span residues 320-432 and 518-538; these read RATG…GFNN and SPPP…PPPP. Low complexity predominate over residues 335–432; sequence ESNSRNSHSN…NMNNNNGFNN (98 aa). Coiled coils occupy residues 607–827 and 854–961; these read LVQT…ETER and KKEE…LESQ. Disordered regions lie at residues 1043–1097 and 1122–1622; these read KQQQ…EVVV and EEVK…VLPL. Composition is skewed to acidic residues over residues 1050–1093 and 1152–1168; these read KEEE…EEEK and DDED…DINE. Basic and acidic residues predominate over residues 1169–1182; sequence EDLKNIDAEIEKMQ. 2 stretches are compositionally biased toward acidic residues: residues 1185-1199 and 1222-1260; these read MGDE…EEEK and ESEE…EQED. Residues 1261–1271 are compositionally biased toward basic and acidic residues; the sequence is KVESDVEEKIV. The span at 1320–1335 shows a compositional bias: acidic residues; it reads DDDEDNEKDVASDSEE. The span at 1353–1369 shows a compositional bias: basic and acidic residues; the sequence is EEKVVEQVKEEINETKF. A compositionally biased stretch (acidic residues) spans 1380–1412; it reads TTTEEKEEEKEEEKVEEEEEKVVEPPTIDDDET. Composition is skewed to low complexity over residues 1435–1449 and 1465–1504; these read STTA…TSST and KTSF…TPTS. Composition is skewed to polar residues over residues 1519–1532 and 1581–1609; these read FGNS…PSTT and AKSN…SPLT.

This sequence belongs to the FKBP-type PPIase family.

The enzyme catalyses [protein]-peptidylproline (omega=180) = [protein]-peptidylproline (omega=0). Its activity is regulated as follows. Inhibited by both FK506 and rapamycin. PPIases accelerate the folding of proteins by catalyzing the cis-trans isomerization of proline imidic peptide bonds in oligopeptides. This Dictyostelium discoideum (Social amoeba) protein is FK506-binding protein 5 (fkbp5).